A 194-amino-acid polypeptide reads, in one-letter code: MTAIQLIVGLGNPGAEYEQTRHNAGAFFVERIAAAQRVNLVPERKFFGLTGRFTHQGQDVRLLIPTTYMNRSGQAVAALAGFYRIPIESILVAHDELDLPPGVAKLKVGGGHGGHNGLRDIIAQLGNQNTFHRLRLGIGHPGDASKVSGFVLGRAPRAEQEKLDASIDFALGVLPDIFAGEWNRAMKNLHSQKA.

Residue Y17 coordinates tRNA. Residue H22 is the Proton acceptor of the active site. 3 residues coordinate tRNA: Y68, N70, and N116.

It belongs to the PTH family. As to quaternary structure, monomer.

Its subcellular location is the cytoplasm. It catalyses the reaction an N-acyl-L-alpha-aminoacyl-tRNA + H2O = an N-acyl-L-amino acid + a tRNA + H(+). Hydrolyzes ribosome-free peptidyl-tRNAs (with 1 or more amino acids incorporated), which drop off the ribosome during protein synthesis, or as a result of ribosome stalling. Its function is as follows. Catalyzes the release of premature peptidyl moieties from peptidyl-tRNA molecules trapped in stalled 50S ribosomal subunits, and thus maintains levels of free tRNAs and 50S ribosomes. The sequence is that of Peptidyl-tRNA hydrolase from Pseudomonas syringae pv. tomato (strain ATCC BAA-871 / DC3000).